A 196-amino-acid chain; its full sequence is MLERIKDSFTESIQTKIDAAEALPESIEKAAEMMVQCLLGGKKILACGNGGSAGDAQHFSAELLNRYEIERPPLPAIALSTDTSTITAIANDYSYDEIFSKQIFALGQPGDILLAISTSGNSGNIIKAMEAALSRDMTIVALTGKDGGAMAGLMSAGDVEIRVPSNVTARIQEVHLLVIHCLCDNIDRTLFPQDEA.

In terms of domain architecture, SIS spans M34–A196. Residue N49–G51 participates in substrate binding. The Zn(2+) site is built by H58 and E62. Residues E62, N91 to D92, S117 to S119, S122, and Q172 contribute to the substrate site. The Zn(2+) site is built by Q172 and H180.

The protein belongs to the SIS family. GmhA subfamily. In terms of assembly, homotetramer. Zn(2+) is required as a cofactor.

The protein resides in the cytoplasm. It catalyses the reaction 2 D-sedoheptulose 7-phosphate = D-glycero-alpha-D-manno-heptose 7-phosphate + D-glycero-beta-D-manno-heptose 7-phosphate. The protein operates within carbohydrate biosynthesis; D-glycero-D-manno-heptose 7-phosphate biosynthesis; D-glycero-alpha-D-manno-heptose 7-phosphate and D-glycero-beta-D-manno-heptose 7-phosphate from sedoheptulose 7-phosphate: step 1/1. In terms of biological role, catalyzes the isomerization of sedoheptulose 7-phosphate in D-glycero-D-manno-heptose 7-phosphate. The chain is Phosphoheptose isomerase from Shewanella denitrificans (strain OS217 / ATCC BAA-1090 / DSM 15013).